The primary structure comprises 322 residues: Cysteine protease YopT (322 aa).

Catalysis depends on residues C139, H258, and D274.

This sequence belongs to the peptidase C58 family. Interacts with human ARHA.

It localises to the secreted. Cysteine protease, which is translocated into infected cells and plays a central role in pathogenesis by cleaving the C-terminus end of the human small GTPase RhoA/ARHA, a regulator of cytoskeleton. Once cleaved, ARHA loses its lipid modification, and is released from the cell membrane, leading to the subsequent disruption of actin cytoskeleton of the host cell. This is Cysteine protease YopT (yopT) from Yersinia pseudotuberculosis serotype I (strain IP32953).